A 1043-amino-acid polypeptide reads, in one-letter code: RNA cytidine acetyltransferase (1043 aa).

ATP contacts are provided by residues 285-294 (GRGKSAAVGL) and arginine 462. The region spanning 551 to 736 (VLMAPIDKSR…VPVYIRQNSN (186 aa)) is the N-acetyltransferase domain. Acetyl-CoA is bound by residues 622 to 624 (VAV), 629 to 635 (QSMGYGG), and arginine 723. Residues 1020 to 1043 (IPDAKDPANKNAKKKKRFSSGGRR) form a disordered region. Residues 1030-1043 (NAKKKKRFSSGGRR) are compositionally biased toward basic residues.

Belongs to the RNA cytidine acetyltransferase family. NAT10 subfamily. As to quaternary structure, part of the small subunit (SSU) processome, composed of more than 70 proteins and the RNA chaperone small nucleolar RNA (snoRNA) U3.

The protein localises to the nucleus. It localises to the nucleolus. The catalysed reaction is a cytidine in 18S rRNA + acetyl-CoA + ATP + H2O = an N(4)-acetylcytidine in 18S rRNA + ADP + phosphate + CoA + H(+). It carries out the reaction a cytidine in tRNA + acetyl-CoA + ATP + H2O = an N(4)-acetylcytidine in tRNA + ADP + phosphate + CoA + H(+). Functionally, RNA cytidine acetyltransferase with specificity toward both 18S rRNA and tRNAs. Catalyzes the formation of N(4)-acetylcytidine (ac4C) in 18S rRNA. Required for early nucleolar cleavages of precursor rRNA at sites A0, A1 and A2 during 18S rRNA synthesis. Catalyzes the formation of ac4C in serine and leucine tRNAs. Requires a tRNA-binding adapter protein for full tRNA acetyltransferase activity but not for 18S rRNA acetylation. Part of the small subunit (SSU) processome, first precursor of the small eukaryotic ribosomal subunit. During the assembly of the SSU processome in the nucleolus, many ribosome biogenesis factors, an RNA chaperone and ribosomal proteins associate with the nascent pre-rRNA and work in concert to generate RNA folding, modifications, rearrangements and cleavage as well as targeted degradation of pre-ribosomal RNA by the RNA exosome. In Caenorhabditis elegans, this protein is RNA cytidine acetyltransferase.